The following is a 366-amino-acid chain: S-adenosylmethionine decarboxylase proenzyme 1 (366 aa).

Active-site residues include Glu-9 and Glu-12. Glu-68 is a binding site for substrate. Catalysis depends on Ser-69, which acts as the Schiff-base intermediate with substrate; via pyruvic acid. Ser-69 is subject to Pyruvic acid (Ser); by autocatalysis. Catalysis depends on Cys-83, which acts as the Proton donor; for catalytic activity. Residues Ser-233 and His-246 each act as proton acceptor; for processing activity in the active site. Residue Glu-250 coordinates substrate.

This sequence belongs to the eukaryotic AdoMetDC family. Requires pyruvate as cofactor. Is synthesized initially as an inactive proenzyme. Formation of the active enzyme involves a self-maturation process in which the active site pyruvoyl group is generated from an internal serine residue via an autocatalytic post-translational modification. Two non-identical subunits are generated from the proenzyme in this reaction, and the pyruvate is formed at the N-terminus of the alpha chain, which is derived from the carboxyl end of the proenzyme. The post-translation cleavage follows an unusual pathway, termed non-hydrolytic serinolysis, in which the side chain hydroxyl group of the serine supplies its oxygen atom to form the C-terminus of the beta chain, while the remainder of the serine residue undergoes an oxidative deamination to produce ammonia and the pyruvoyl group blocking the N-terminus of the alpha chain.

It catalyses the reaction S-adenosyl-L-methionine + H(+) = S-adenosyl 3-(methylsulfanyl)propylamine + CO2. It functions in the pathway amine and polyamine biosynthesis; S-adenosylmethioninamine biosynthesis; S-adenosylmethioninamine from S-adenosyl-L-methionine: step 1/1. Functionally, essential for biosynthesis of the polyamines spermidine and spermine. Essential for polyamine homeostasis, and normal plant embryogenesis, growth and development. This Arabidopsis thaliana (Mouse-ear cress) protein is S-adenosylmethionine decarboxylase proenzyme 1.